A 1281-amino-acid chain; its full sequence is Zinc finger transcription factor Trps1 (1281 aa).

The interval 1-198 (MVRKKNPPLR…VPSDGGVRLN (198 aa)) is disordered. Lys-29 is covalently cross-linked (Glycyl lysine isopeptide (Lys-Gly) (interchain with G-Cter in SUMO2)). Residues 40 to 49 (DQMSENTDQS) show a composition bias toward polar residues. Positions 53–63 (ELNHKEEHSLH) are enriched in basic and acidic residues. Lys-76 participates in a covalent cross-link: Glycyl lysine isopeptide (Lys-Gly) (interchain with G-Cter in SUMO2). Residues Ser-90 and Ser-127 each carry the phosphoserine modification. Over residues 148–162 (LETKEDQKMSPKATE) the composition is skewed to basic and acidic residues. A compositionally biased stretch (polar residues) spans 163–189 (ETGQAQSGQANCQGLSPVSVASKNPQV). 2 positions are modified to phosphoserine: Ser-178 and Ser-216. A C2H2-type 1; atypical zinc finger spans residues 222–247 (FKCNICGYGYYGNDPTDLIKHFRKYH). Residue Lys-263 forms a Glycyl lysine isopeptide (Lys-Gly) (interchain with G-Cter in SUMO2) linkage. The segment at 333-358 (FRCKFCNFTYMGNSSTELEQHFLQTH) adopts a C2H2-type 2; atypical zinc-finger fold. The tract at residues 365-394 (SLPSSEVAKPSEKNSNKSIPALQSSDSGDL) is disordered. Residues 380–391 (NKSIPALQSSDS) are compositionally biased toward polar residues. Glycyl lysine isopeptide (Lys-Gly) (interchain with G-Cter in SUMO2) cross-links involve residues Lys-418, Lys-457, Lys-474, and Lys-488. The tract at residues 483 to 512 (QNDLAKSSEGETMTKTDKSSSGAKKKDFSS) is disordered. Residues 488–512 (KSSEGETMTKTDKSSSGAKKKDFSS) show a composition bias toward basic and acidic residues. The C2H2-type 3; atypical zinc finger occupies 614–637 (HQCHQCSFTTPDVDVLLFHYESVH). Residues 635–819 (SVHESQASDV…SLGLLTPVSG (185 aa)) form a mediates interaction with GLI3 region. Lys-645 is covalently cross-linked (Glycyl lysine isopeptide (Lys-Gly) (interchain with G-Cter in SUMO2)). C2H2-type zinc fingers lie at residues 666–689 (HSCT…RRAH) and 692–715 (YKCR…NTVH). Lys-737 participates in a covalent cross-link: Glycyl lysine isopeptide (Lys-Gly) (interchain with G-Cter in SUMO2). The residue at position 751 (Thr-751) is a Phosphothreonine. Lys-755 participates in a covalent cross-link: Glycyl lysine isopeptide (Lys-Gly) (interchain with G-Cter in SUMO2). Residue Lys-766 forms a Glycyl lysine isopeptide (Lys-Gly) (interchain with G-Cter in SUMO1); alternate linkage. Lys-766 is covalently cross-linked (Glycyl lysine isopeptide (Lys-Gly) (interchain with G-Cter in SUMO2); alternate). Glycyl lysine isopeptide (Lys-Gly) (interchain with G-Cter in SUMO2) cross-links involve residues Lys-825, Lys-850, Lys-877, and Lys-879. The interval 856–887 (APAGGEKSGALPQQYPASGENKSKDESQSLLR) is disordered. A GATA-type zinc finger spans residues 896-920 (CANCLTTKTSLWRKNANGGYVCNAC). Glycyl lysine isopeptide (Lys-Gly) (interchain with G-Cter in SUMO2) cross-links involve residues Lys-925, Lys-937, and Lys-965. A compositionally biased stretch (polar residues) spans 961–977 (EQLNKQQRGSNEEQVNG). The segment at 961–1000 (EQLNKQQRGSNEEQVNGSPLERRSEDHLTESHQREIPLPS) is disordered. Ser-978 carries the post-translational modification Phosphoserine. Residues 980–995 (LERRSEDHLTESHQRE) are compositionally biased toward basic and acidic residues. The tract at residues 985-1184 (EDHLTESHQR…PTANGASKEK (200 aa)) is mediates interaction with RNF4. Glycyl lysine isopeptide (Lys-Gly) (interchain with G-Cter in SUMO2) cross-links involve residues Lys-1003, Lys-1012, Lys-1030, and Lys-1040. The tract at residues 1039-1080 (IKSPQESTGDPGNSSSVSEGKGSSERGSPIEKYMRPAKHPNY) is disordered. Over residues 1040–1049 (KSPQESTGDP) the composition is skewed to polar residues. Ser-1041 bears the Phosphoserine mark. Positions 1050-1059 (GNSSSVSEGK) are enriched in low complexity. The span at 1060 to 1072 (GSSERGSPIEKYM) shows a compositional bias: basic and acidic residues. Ser-1066 is subject to Phosphoserine. Residue Lys-1070 forms a Glycyl lysine isopeptide (Lys-Gly) (interchain with G-Cter in SUMO2) linkage. Position 1085 is a phosphoserine (Ser-1085). The tract at residues 1163–1281 (PLDLAIKHSR…QVEKNGKPKE (119 aa)) is transcriptional repressor domain. A disordered region spans residues 1168-1196 (IKHSRPGPTANGASKEKTKAPPNVKNEGP). Residues Lys-1192 and Lys-1201 each participate in a glycyl lysine isopeptide (Lys-Gly) (interchain with G-Cter in SUMO2); alternate cross-link. Residues Lys-1192 and Lys-1201 each participate in a glycyl lysine isopeptide (Lys-Gly) (interchain with G-Cter in SUMO); alternate cross-link. Lys-1201 participates in a covalent cross-link: Glycyl lysine isopeptide (Lys-Gly) (interchain with G-Cter in SUMO1); alternate. 2 consecutive C2H2-type zinc fingers follow at residues 1215 to 1237 (TKCV…MSCH) and 1243 to 1267 (FQCS…RGLH).

As to quaternary structure, interacts with RNF4; regulates TRPS1 repressor activity. Interacts specifically with the activator form of GLI3 (GLI3A) but not with the repressor form (GLI3R). In terms of processing, sumoylated. Sumoylation in the repressor domain inhibits the transcription repression activity. Sumoylation on Lys-1201 is the major site. Appears to be sumoylated on multiple sites. In terms of tissue distribution, ubiquitously expressed in the adult. Found in fetal brain, lung, kidney, liver, spleen and thymus. More highly expressed in androgen-dependent than in androgen-independent prostate cancer cells.

Its subcellular location is the nucleus. Its function is as follows. Transcriptional repressor. Binds specifically to GATA sequences and represses expression of GATA-regulated genes at selected sites and stages in vertebrate development. Regulates chondrocyte proliferation and differentiation. Executes multiple functions in proliferating chondrocytes, expanding the region of distal chondrocytes, activating proliferation in columnar cells and supporting the differentiation of columnar into hypertrophic chondrocytes. This is Zinc finger transcription factor Trps1 (TRPS1) from Homo sapiens (Human).